The primary structure comprises 266 residues: Glutamate racemase (266 aa).

Residues 9–10 (DS) and 41–42 (YG) contribute to the substrate site. The active-site Proton donor/acceptor is C72. Residue 73-74 (NT) participates in substrate binding. The Proton donor/acceptor role is filled by C183. 184 to 185 (TH) is a binding site for substrate.

This sequence belongs to the aspartate/glutamate racemases family.

The catalysed reaction is L-glutamate = D-glutamate. The protein operates within cell wall biogenesis; peptidoglycan biosynthesis. In terms of biological role, provides the (R)-glutamate required for cell wall biosynthesis. This chain is Glutamate racemase, found in Listeria monocytogenes serotype 4b (strain CLIP80459).